The chain runs to 349 residues: Methylthioribose-1-phosphate isomerase (349 aa).

Substrate contacts are provided by residues 51–53, arginine 94, and glutamine 199; that span reads RGA. Residue aspartate 240 is the Proton donor of the active site. 250-251 serves as a coordination point for substrate; that stretch reads NK.

Belongs to the EIF-2B alpha/beta/delta subunits family. MtnA subfamily. As to quaternary structure, homodimer.

The enzyme catalyses 5-(methylsulfanyl)-alpha-D-ribose 1-phosphate = 5-(methylsulfanyl)-D-ribulose 1-phosphate. It participates in amino-acid biosynthesis; L-methionine biosynthesis via salvage pathway; L-methionine from S-methyl-5-thio-alpha-D-ribose 1-phosphate: step 1/6. Catalyzes the interconversion of methylthioribose-1-phosphate (MTR-1-P) into methylthioribulose-1-phosphate (MTRu-1-P). The sequence is that of Methylthioribose-1-phosphate isomerase from Bacillus mycoides (strain KBAB4) (Bacillus weihenstephanensis).